The following is a 103-amino-acid chain: Colicin-V (103 aa).

The propeptide occupies 1 to 15 (MRTLTLNELDSVSGG). Residues Cys-91 and Cys-102 are joined by a disulfide bond.

The protein localises to the secreted. In terms of biological role, colicin V kills sensitive cells by disrupting the membrane potential. Colicins are polypeptide toxins produced by, and active against E.coli and closely related bacteria. The chain is Colicin-V (cvaC) from Escherichia coli.